The following is a 329-amino-acid chain: Ferredoxin--NADP reductase 2 (329 aa).

The FAD site is built by T18, E37, Q45, Y50, V90, F124, D285, and S326.

Belongs to the ferredoxin--NADP reductase type 2 family. Homodimer. FAD is required as a cofactor.

The enzyme catalyses 2 reduced [2Fe-2S]-[ferredoxin] + NADP(+) + H(+) = 2 oxidized [2Fe-2S]-[ferredoxin] + NADPH. The polypeptide is Ferredoxin--NADP reductase 2 (Bacillus cytotoxicus (strain DSM 22905 / CIP 110041 / 391-98 / NVH 391-98)).